Reading from the N-terminus, the 515-residue chain is Protein FAM98A (515 aa).

Disordered stretches follow at residues 297–411 (VLMG…YHGG) and 432–515 (SGYQ…HYTS). The segment covering 302–311 (VPDRGGRPNE) has biased composition (basic and acidic residues). The segment covering 382–395 (WTDGGSASGGGYQD) has biased composition (gly residues). Residues 444–456 (RYQDGGHHGERGS) show a composition bias toward basic and acidic residues. The segment covering 457 to 481 (GRGGRGGRGGRGGRGSQGGGWGGRG) has biased composition (gly residues). Residues 485-501 (YHQGGQFEQHFQHGGYQ) show a composition bias toward low complexity. Positions 502–515 (YSHSGFGQGRHYTS) are enriched in polar residues.

Belongs to the FAM98 family. Interacts (via N- and C-terminus) with DDX1. Interacts (via N- and C-terminus) with C14orf166. Interacts with FAM98B. Interacts with PLEKHM1 (via N- and C-terminus).

Positively stimulates PRMT1-induced protein arginine methylation. Involved in skeletal homeostasis. Positively regulates lysosome peripheral distribution and ruffled border formation in osteoclasts. The protein is Protein FAM98A of Rattus norvegicus (Rat).